The primary structure comprises 371 residues: Chaperone protein DnaJ (371 aa).

The J domain occupies 6–71 (DYYEILGVEK…QKRAQYDRFG (66 aa)). The disordered stretch occupies residues 104 to 123 (GGMGGQQRQRRNRNEPRRGS). Residues 139 to 217 (GIEKEIEFDT…CKGKGRVAEH (79 aa)) form a CR-type zinc finger. Positions 152, 155, 169, 172, 191, 194, 205, and 208 each coordinate Zn(2+). 4 CXXCXGXG motif repeats span residues 152-159 (CDECKGTG), 169-176 (CGTCGGSG), 191-198 (CPTCHGQG), and 205-212 (CKPCKGKG).

It belongs to the DnaJ family. Homodimer. The cofactor is Zn(2+).

Its subcellular location is the cytoplasm. Its function is as follows. Participates actively in the response to hyperosmotic and heat shock by preventing the aggregation of stress-denatured proteins and by disaggregating proteins, also in an autonomous, DnaK-independent fashion. Unfolded proteins bind initially to DnaJ; upon interaction with the DnaJ-bound protein, DnaK hydrolyzes its bound ATP, resulting in the formation of a stable complex. GrpE releases ADP from DnaK; ATP binding to DnaK triggers the release of the substrate protein, thus completing the reaction cycle. Several rounds of ATP-dependent interactions between DnaJ, DnaK and GrpE are required for fully efficient folding. Also involved, together with DnaK and GrpE, in the DNA replication of plasmids through activation of initiation proteins. The polypeptide is Chaperone protein DnaJ (Bdellovibrio bacteriovorus (strain ATCC 15356 / DSM 50701 / NCIMB 9529 / HD100)).